The following is a 207-amino-acid chain: MQIPFQRALRLCLRAALAAIASAAHADDGTIVITGTITDTTCVIEDPSGPNHTKVVQLPKISKNALKANGDQAGRTPFIIKLKDCPSSLGNGVKAYFEPGPTTDYSTGDLRAYKMVYATNPQTQLSNITAATEAQGVQVRISNLNDSKITMGANEATQQAAGFDPEVQTGGTSRTVTMRYLASYVKKNGDVEASAITTYVGFSVVYP.

The signal sequence occupies residues 1–26; sequence MQIPFQRALRLCLRAALAAIASAAHA. Residues Cys-42 and Cys-85 are joined by a disulfide bond.

The protein belongs to the fimbrial protein family.

It localises to the fimbrium. Bordetella pertussis is the causative agent of whooping cough. An essential step in the disease process is the attachment of the bacteria to the ciliated epithelium of the respiratory tract, enabling the organism to resist normal host-clearance mechanisms. It is unclear which bacterial cell surface component are responsible for adherence but the fimbriae of B.pertussis are prime candidates for being involved in this process. This is Serotype 2 fimbrial subunit (fim2) from Bordetella pertussis (strain Tohama I / ATCC BAA-589 / NCTC 13251).